Consider the following 682-residue polypeptide: NAD(+)--arginine ADP-ribosyltransferase (682 aa).

The 232-residue stretch at 383-614 (KIIRRELRGY…KLIQAEVMTT (232 aa)) folds into the TR mART core domain. Active-site residues include R478, S503, and E576.

The protein belongs to the Tevenvirinae NAD(+)--arginine ADP-ribosyltransferase family. In terms of processing, proteolytic cleavages at the N- and C-termini by the prohead core protein protease give rise to the mature enzyme.

It is found in the virion. The enzyme catalyses L-arginyl-[protein] + NAD(+) = N(omega)-(ADP-D-ribosyl)-L-arginyl-[protein] + nicotinamide + H(+). Its function is as follows. ADP-ribosyltransferase that efficiently ADP-ribosylates one of the two alpha subunits of host RNA polymerase RPOA on an arginine located in the C-terminal region. ADP-ribosylation of RPOA alpha subunit enhances the transcription of viral early genes. Also ribosylates RPOA subunits beta, beta' and sigma 70 and performs an autoribosylation reaction. Additional in-vitro identified targets include proteins involved in either translation or cellular metabolism such as elongation factor-Tu or GroeL. Mono-ADP-ribosylates host MAZF which may inactivate the latter. In Escherichia coli (Bacteriophage T4), this protein is NAD(+)--arginine ADP-ribosyltransferase (alt).